We begin with the raw amino-acid sequence, 571 residues long: Proline--tRNA ligase (571 aa).

This sequence belongs to the class-II aminoacyl-tRNA synthetase family. ProS type 1 subfamily. As to quaternary structure, homodimer.

The protein localises to the cytoplasm. The catalysed reaction is tRNA(Pro) + L-proline + ATP = L-prolyl-tRNA(Pro) + AMP + diphosphate. Functionally, catalyzes the attachment of proline to tRNA(Pro) in a two-step reaction: proline is first activated by ATP to form Pro-AMP and then transferred to the acceptor end of tRNA(Pro). As ProRS can inadvertently accommodate and process non-cognate amino acids such as alanine and cysteine, to avoid such errors it has two additional distinct editing activities against alanine. One activity is designated as 'pretransfer' editing and involves the tRNA(Pro)-independent hydrolysis of activated Ala-AMP. The other activity is designated 'posttransfer' editing and involves deacylation of mischarged Ala-tRNA(Pro). The misacylated Cys-tRNA(Pro) is not edited by ProRS. In Shewanella baltica (strain OS185), this protein is Proline--tRNA ligase.